Consider the following 78-residue polypeptide: uncharacterized protein (78 aa).

This is an uncharacterized protein from Bacillus subtilis (strain 168).